Consider the following 237-residue polypeptide: Uridylate kinase (237 aa).

12–15 contacts ATP; that stretch reads KLSG. The tract at residues 20-25 is involved in allosteric activation by GTP; the sequence is GDEGFG. Residue G54 participates in UMP binding. Residues G55 and R59 each contribute to the ATP site. Residues D74 and 135–142 each bind UMP; that span reads TGSPFFTT. Positions 162, 168, and 171 each coordinate ATP.

The protein belongs to the UMP kinase family. In terms of assembly, homohexamer.

The protein resides in the cytoplasm. The enzyme catalyses UMP + ATP = UDP + ADP. The protein operates within pyrimidine metabolism; CTP biosynthesis via de novo pathway; UDP from UMP (UMPK route): step 1/1. With respect to regulation, allosterically activated by GTP. Inhibited by UTP. Its function is as follows. Catalyzes the reversible phosphorylation of UMP to UDP. The sequence is that of Uridylate kinase from Mannheimia succiniciproducens (strain KCTC 0769BP / MBEL55E).